The following is a 258-amino-acid chain: Small ribosomal subunit protein mS40 (258 aa).

The N-terminal 35 residues, 1–35, are a transit peptide targeting the mitochondrion; that stretch reads MAASVLNTVLRRLPMLSLFRGSHRVQVPLQTLCTK. Phosphoserine occurs at positions 38 and 49. The disordered stretch occupies residues 214–258; sequence SRLRRLYQGHLQEESGPPPESMPKMPPRTPAEASSTGQTGPQSAL. Residues 229–242 show a composition bias toward pro residues; sequence GPPPESMPKMPPRT. A compositionally biased stretch (polar residues) spans 245-258; that stretch reads EASSTGQTGPQSAL.

The protein belongs to the bacterial ribosomal protein bS18 family. Mitochondrion-specific ribosomal protein mS40 subfamily. As to quaternary structure, component of the mitochondrial small ribosomal subunit (mt-SSU). Mature mammalian 55S mitochondrial ribosomes consist of a small (28S) and a large (39S) subunit. The 28S small subunit contains a 12S ribosomal RNA (12S mt-rRNA) and 30 different proteins. The 39S large subunit contains a 16S rRNA (16S mt-rRNA), a copy of mitochondrial valine transfer RNA (mt-tRNA(Val)), which plays an integral structural role, and 52 different proteins. mS40 has a zinc binding site.

Its subcellular location is the mitochondrion. This chain is Small ribosomal subunit protein mS40 (MRPS18B), found in Homo sapiens (Human).